Here is a 104-residue protein sequence, read N- to C-terminus: Small ribosomal subunit protein uS10 (104 aa).

This sequence belongs to the universal ribosomal protein uS10 family. Part of the 30S ribosomal subunit.

Its function is as follows. Involved in the binding of tRNA to the ribosomes. The protein is Small ribosomal subunit protein uS10 of Albidiferax ferrireducens (strain ATCC BAA-621 / DSM 15236 / T118) (Rhodoferax ferrireducens).